Reading from the N-terminus, the 140-residue chain is Transcription antitermination protein NusB (140 aa).

This sequence belongs to the NusB family.

Functionally, involved in transcription antitermination. Required for transcription of ribosomal RNA (rRNA) genes. Binds specifically to the boxA antiterminator sequence of the ribosomal RNA (rrn) operons. The protein is Transcription antitermination protein NusB of Sorangium cellulosum (strain So ce56) (Polyangium cellulosum (strain So ce56)).